Here is a 292-residue protein sequence, read N- to C-terminus: General transcription factor IIE subunit 2 (292 aa).

Met-1 is modified (N-acetylmethionine). Positions 17 to 64 (LSTPVVEKRAVPSESPSSSSSKKKKAKVEHGGSSGSKQNSDHNNGSFN) are disordered. The segment covering 51–63 (GSKQNSDHNNGSF) has biased composition (polar residues). Residue Ser-62 is modified to Phosphoserine. A DNA-binding region (TFIIE beta) is located at residues 67–147 (ALSGSSGYKF…YAFKPKYNLK (81 aa)). Lys-75 carries the N6-acetyllysine modification. The segment at 245-277 (SMQESGPKKVASIQRRKKPASQKKRRFKTHNEH) is disordered. The span at 258–272 (QRRKKPASQKKRRFK) shows a compositional bias: basic residues.

This sequence belongs to the TFIIE beta subunit family. As to quaternary structure, tetramer of two alpha and two beta chains. Interacts with FACT subunit SUPT16H. Interacts with ATF7IP. Interacts with SND1. Part of TBP-based Pol II pre-initiation complex (PIC), in which Pol II core assembles with general transcription factors and other specific initiation factors including GTF2E1, GTF2E2, GTF2F1, GTF2F2, TCEA1, ERCC2, ERCC3, GTF2H2, GTF2H3, GTF2H4, GTF2H5, GTF2A1, GTF2A2, GTF2B and TBP; this large multi-subunit PIC complex mediates DNA unwinding and targets Pol II core to the transcription start site where the first phosphodiester bond forms.

Its subcellular location is the nucleus. Its function is as follows. Recruits TFIIH to the initiation complex and stimulates the RNA polymerase II C-terminal domain kinase and DNA-dependent ATPase activities of TFIIH. Both TFIIH and TFIIE are required for promoter clearance by RNA polymerase. This chain is General transcription factor IIE subunit 2 (Gtf2e2), found in Mus musculus (Mouse).